We begin with the raw amino-acid sequence, 66 residues long: Phylloseptin-Az2 (66 aa).

An N-terminal signal peptide occupies residues 1–22 (MAFLKKSLFLVLFLGLVSLSIC). A propeptide spanning residues 23-44 (EEEKRETEEKENEQEDDDKSEE) is cleaved from the precursor. Residues 24 to 45 (EEKRETEEKENEQEDDDKSEEK) form a disordered region. The segment covering 31 to 41 (EKENEQEDDDK) has biased composition (acidic residues). Residue phenylalanine 65 is modified to Phenylalanine amide.

As to expression, expressed by the skin glands.

It localises to the secreted. Its function is as follows. Has antibacterial activity against the Gram-negative bacteria E.coli ATCC 11775 (MIC=7.2 uM), and the Gram-positive bacteria S.aureus ATCC 12600 (MIC=3.6 uM) and M.luteus ATCC 49732 (MIC=1.8 uM). Does not inhibit the growth of the fungus C.albicans. This chain is Phylloseptin-Az2, found in Pithecopus azureus (Orange-legged monkey tree frog).